Consider the following 336-residue polypeptide: Spore photoproduct lyase (336 aa).

The Radical SAM core domain occupies 74–305 (CKPSANYQLP…KFGQFGYGKY (232 aa)). [4Fe-4S] cluster contacts are provided by Cys-88, Cys-92, and Cys-95. A DNA-binding region (H-T-H motif) is located at residues 215–232 (ESAYNILNSGYKTGFIVG).

The protein belongs to the radical SAM superfamily. SPL family. As to quaternary structure, monomer or homodimer. [4Fe-4S] cluster is required as a cofactor. S-adenosyl-L-methionine serves as cofactor.

It catalyses the reaction (5R)-5,6-dihydro-5-(thymidin-7-yl)thymidine in DNA = a thymidine dimer in DNA. Involved in repair of UV radiation-induced DNA damage during spore germination. Can repair thymine dimer 5-thyminyl-5,6-dihydrothymine (known as spore photoproduct (SP)) by in situ monomerization of SP to two thymines. In Clostridium acetobutylicum (strain ATCC 824 / DSM 792 / JCM 1419 / IAM 19013 / LMG 5710 / NBRC 13948 / NRRL B-527 / VKM B-1787 / 2291 / W), this protein is Spore photoproduct lyase (splB).